The chain runs to 195 residues: MSAADAEYRVRHQSFWFVACVAVLVAQIVTEYLMGRVPICACGYVKLWEGGVNTSGNSQHLSDWYTPSHIIHGFLFYGLGYLILRRKPLAARLLLALVIESGWELLENSPLIIDRYRTATIALDYYGDSILNSAMDTVFMCVGFFFASRAPVALTVAIAIFFEIFTGYVIRDNLTLNVLMLIWPVEAIKVWQGGV.

A run of 4 helical transmembrane segments spans residues 15–35 (FWFVACVAVLVAQIVTEYLMG), 64–84 (WYTPSHIIHGFLFYGLGYLIL), 127–147 (GDSILNSAMDTVFMCVGFFFA), and 150–170 (APVALTVAIAIFFEIFTGYVI).

This sequence belongs to the UPF0314 family.

Its subcellular location is the cell membrane. The chain is UPF0314 protein RHECIAT_CH0004233 from Rhizobium etli (strain CIAT 652).